The primary structure comprises 558 residues: Ribonuclease J (558 aa).

Histidine 81, histidine 83, aspartate 85, histidine 86, histidine 148, and aspartate 170 together coordinate Zn(2+). 371 to 375 (HVSGH) contacts substrate. Position 397 (histidine 397) interacts with Zn(2+).

Belongs to the metallo-beta-lactamase superfamily. RNA-metabolizing metallo-beta-lactamase-like family. Bacterial RNase J subfamily. In terms of assembly, homodimer. Zn(2+) serves as cofactor.

The protein localises to the cytoplasm. Functionally, an RNase that has endonuclease and 5'-3' exonuclease activity. The 5'-exonuclease activity acts on 5'-monophosphate but not 5'-triphosphate ends. Endonuclease activity can cleave within 4 nucleotides of the 5'-end of a triphosphorylated RNA. Plays the major role in pre-23S rRNA maturation, and a minor role in processing of pre-5S and pre-16S rRNA. The polypeptide is Ribonuclease J (Mycolicibacterium smegmatis (strain ATCC 700084 / mc(2)155) (Mycobacterium smegmatis)).